A 172-amino-acid polypeptide reads, in one-letter code: MKRDKKELIVQQVTEKLEKAQGIYLTDFQGLDVAKMAELRNEFRKVGVEYRVVKNTLVKKALENVAGGDRLAEGLYNTTGVAIGYDDPIVAAKVIEKFSKKNENLKFKMAAIDGSVFEASQLPQLASMLSKVENIGRVAGLVNNMVASVPMVVNAVMRDLVSVLDQVAKQKQ.

It belongs to the universal ribosomal protein uL10 family. Part of the ribosomal stalk of the 50S ribosomal subunit. The N-terminus interacts with L11 and the large rRNA to form the base of the stalk. The C-terminus forms an elongated spine to which L12 dimers bind in a sequential fashion forming a multimeric L10(L12)X complex.

Functionally, forms part of the ribosomal stalk, playing a central role in the interaction of the ribosome with GTP-bound translation factors. This chain is Large ribosomal subunit protein uL10, found in Prosthecochloris aestuarii (strain DSM 271 / SK 413).